The chain runs to 162 residues: Peptide methionine sulfoxide reductase MsrA (162 aa).

Cys10 is an active-site residue.

The protein belongs to the MsrA Met sulfoxide reductase family.

It carries out the reaction L-methionyl-[protein] + [thioredoxin]-disulfide + H2O = L-methionyl-(S)-S-oxide-[protein] + [thioredoxin]-dithiol. The enzyme catalyses [thioredoxin]-disulfide + L-methionine + H2O = L-methionine (S)-S-oxide + [thioredoxin]-dithiol. Functionally, has an important function as a repair enzyme for proteins that have been inactivated by oxidation. Catalyzes the reversible oxidation-reduction of methionine sulfoxide in proteins to methionine. The protein is Peptide methionine sulfoxide reductase MsrA of Clostridium acetobutylicum (strain ATCC 824 / DSM 792 / JCM 1419 / IAM 19013 / LMG 5710 / NBRC 13948 / NRRL B-527 / VKM B-1787 / 2291 / W).